A 338-amino-acid chain; its full sequence is tRNA N6-adenosine threonylcarbamoyltransferase (338 aa).

Fe cation-binding residues include histidine 111 and histidine 115. Residues 134-138 (LLSGG), aspartate 167, glycine 180, and asparagine 275 each bind substrate. Residue aspartate 304 coordinates Fe cation.

This sequence belongs to the KAE1 / TsaD family. The cofactor is Fe(2+).

Its subcellular location is the cytoplasm. It carries out the reaction L-threonylcarbamoyladenylate + adenosine(37) in tRNA = N(6)-L-threonylcarbamoyladenosine(37) in tRNA + AMP + H(+). In terms of biological role, required for the formation of a threonylcarbamoyl group on adenosine at position 37 (t(6)A37) in tRNAs that read codons beginning with adenine. Is involved in the transfer of the threonylcarbamoyl moiety of threonylcarbamoyl-AMP (TC-AMP) to the N6 group of A37, together with TsaE and TsaB. TsaD likely plays a direct catalytic role in this reaction. The chain is tRNA N6-adenosine threonylcarbamoyltransferase from Leptospira interrogans serogroup Icterohaemorrhagiae serovar copenhageni (strain Fiocruz L1-130).